Here is a 283-residue protein sequence, read N- to C-terminus: Pantothenate synthetase (283 aa).

Residue 30–37 (MGNLHDGH) coordinates ATP. Catalysis depends on His-37, which acts as the Proton donor. Residue Gln-61 coordinates (R)-pantoate. Gln-61 contacts beta-alanine. 149–152 (GEKD) is a binding site for ATP. (R)-pantoate is bound at residue Gln-155. Residues Met-178 and 186-189 (LSSR) contribute to the ATP site.

Belongs to the pantothenate synthetase family. In terms of assembly, homodimer.

It is found in the cytoplasm. It catalyses the reaction (R)-pantoate + beta-alanine + ATP = (R)-pantothenate + AMP + diphosphate + H(+). The protein operates within cofactor biosynthesis; (R)-pantothenate biosynthesis; (R)-pantothenate from (R)-pantoate and beta-alanine: step 1/1. With respect to regulation, activation requires a combination of a divalent cation, magnesium or manganese, and a monovalent cation, potassium or ammonium. Above the optimum concentration for activation, magnesium and manganese are rather inhibitory. Also activated by 2-mercaptoethanol, dithiothreitol, cysteine and glutathione. Inhibited by divalent cations (mercury, cobalt, zinc, copper, silver), chelating agents (EDTA, EGTA and o-phenanthroline), and analogs of beta-alanine (taurine, gamma-aminobutyrate, gamma-amino-beta-hydroxybutyrate). In terms of biological role, catalyzes the condensation of pantoate with beta-alanine in an ATP-dependent reaction via a pantoyl-adenylate intermediate. In Escherichia coli (strain K12), this protein is Pantothenate synthetase (panC).